A 458-amino-acid polypeptide reads, in one-letter code: UDP-N-acetylmuramate--L-alanine ligase (458 aa).

Position 119-125 (119-125 (GTHGKTT)) interacts with ATP.

This sequence belongs to the MurCDEF family.

The protein resides in the cytoplasm. It carries out the reaction UDP-N-acetyl-alpha-D-muramate + L-alanine + ATP = UDP-N-acetyl-alpha-D-muramoyl-L-alanine + ADP + phosphate + H(+). It participates in cell wall biogenesis; peptidoglycan biosynthesis. Its function is as follows. Cell wall formation. This Phocaeicola vulgatus (strain ATCC 8482 / DSM 1447 / JCM 5826 / CCUG 4940 / NBRC 14291 / NCTC 11154) (Bacteroides vulgatus) protein is UDP-N-acetylmuramate--L-alanine ligase.